A 128-amino-acid chain; its full sequence is Flagellar assembly factor FliW 1 (128 aa).

It belongs to the FliW family. In terms of assembly, interacts with translational regulator CsrA and flagellin(s).

It localises to the cytoplasm. Functionally, acts as an anti-CsrA protein, binds CsrA and prevents it from repressing translation of its target genes, one of which is flagellin. Binds to flagellin and participates in the assembly of the flagellum. This is Flagellar assembly factor FliW 1 from Wolinella succinogenes (strain ATCC 29543 / DSM 1740 / CCUG 13145 / JCM 31913 / LMG 7466 / NCTC 11488 / FDC 602W) (Vibrio succinogenes).